A 211-amino-acid chain; its full sequence is Probable nicotinate-nucleotide adenylyltransferase (211 aa).

It belongs to the NadD family.

It catalyses the reaction nicotinate beta-D-ribonucleotide + ATP + H(+) = deamido-NAD(+) + diphosphate. It participates in cofactor biosynthesis; NAD(+) biosynthesis; deamido-NAD(+) from nicotinate D-ribonucleotide: step 1/1. Catalyzes the reversible adenylation of nicotinate mononucleotide (NaMN) to nicotinic acid adenine dinucleotide (NaAD). The polypeptide is Probable nicotinate-nucleotide adenylyltransferase (Legionella pneumophila (strain Lens)).